The sequence spans 409 residues: Beta-arrestin-2 (409 aa).

Tyrosine 48 carries the phosphotyrosine modification. A hydroxyproline; by PHD2 mark is found at proline 176 and proline 181. The interaction with TRAF6 stretch occupies residues 240-409 (ADICLFSTAQ…KDDDYDDQLC (170 aa)). At serine 360 the chain carries Phosphoserine. The interval 363–409 (PETDVPVDTNLIEFDTNYATDDDIVFEDFARLRLKGMKDDDYDDQLC) is interaction with AP2B1. At threonine 382 the chain carries Phosphothreonine. The [DE]-X(1,2)-F-X-X-[FL]-X-X-X-R motif signature appears at 385–395 (DIVFEDFARLR).

It belongs to the arrestin family. In terms of assembly, homooligomer; the self-association is mediated by InsP6-binding. Heterooligomer with ARRB1; the association is mediated by InsP6-binding. Interacts with ADRB2 and CHRM2. Interacts with PDE4A. Interacts with PDE4D. Interacts with MAPK10, MAPK1 and MAPK3. Interacts with DRD2. Interacts with FSHR. Interacts with CLTC. Interacts with HTR2C. Interacts with CCR5. Interacts with CXCR4. Interacts with SRC. Interacts with DUSP16; the interaction is interrupted by stimulation of AGTR1 and activation of MAPK10. Interacts with CHUK; the interaction is enhanced stimulation of ADRB2. Interacts with RELA. Interacts with MDM2; the interaction is enhanced by activation of GPCRs. Interacts with SLC9A5. Interacts with TRAF6. Interacts with IGF1R. Interacts with ENG. Interacts with KIR2DL1, KIR2DL3 and KIR2DL4. Interacts with LDLR. Interacts with AP2B1. Interacts with C5AR1. Interacts with RAF1. Interacts with MAP2K1. Interacts with MAPK1. Interacts with MAPK10; the interaction enhances MAPK10 activation by MAP3K5. Interacts with MAP2K4; the interaction is enhanced by presence of MAP3K5 and MAPK10. Interacts with MAP3K5. Interacts with AKT1. Interacts with IKBKB and MAP3K14. Interacts with SMO (activated). Interacts with GSK3A and GSK3B. Associates with protein phosphatase 2A (PP2A). Interacts with DHX8; the interaction is detected in the nucleus upon OR1D2 stimulation. Interacts with GAPDHS; the interaction is detected in the nucleus upon OR1D2 stimulation. Interacts with H2AFX; the interaction is detected in the nucleus upon OR1D2 stimulation. Interacts with KIF14; the interaction is detected in the nucleus upon OR1D2 stimulation. Interacts with RCC1; the interaction is detected in the nucleus upon OR1D2 stimulation. Interacts with CXCR4; the interaction is dependent on C-terminal phosphorylation of CXCR4 and allows activation of MAPK1 and MAPK3. Interacts with GPR143. Interacts with HCK and CXCR1 (phosphorylated). Interacts with ACKR3 and ACKR4. Interacts with ARRDC1; the interaction is direct. Interacts with GPR61, GPR62 and GPR135. Interacts (via NACHT and LRR domains) with NLRP3; this interaction is direct and inducible by omega-3 polyunsaturated fatty acids (PUFAs). Interacts with FFAR4 (via C-terminus); this interaction is stimulated by long-chain fatty acids (LCFAs). Interacts with GPR35. Interacts with GPR84. Interacts with TIGIT; this interaction inhibits the NF-kappa-B pathway. Interacts with TGFBR3. In terms of processing, phosphorylated at Thr-382 in the cytoplasm; probably dephosphorylated at the plasma membrane. The phosphorylation does not regulate internalization and recycling of ADRB2, interaction with clathrin or AP2B1. The ubiquitination status appears to regulate the formation and trafficking of beta-arrestin-GPCR complexes and signaling. Ubiquitination appears to occur GPCR-specific. Ubiquitinated by MDM2; the ubiquitination is required for rapid internalization of ADRB2. Deubiquitinated by USP33; the deubiquitination leads to a dissociation of the beta-arrestin-GPCR complex. Stimulation of a class A GPCR, such as ADRB2, induces transient ubiquitination and subsequently promotes association with USP33. Stimulation of a class B GPCR promotes a sustained ubiquitination. Deubiquitinated by USP20; allowing USP20 to deubiquitinate TRAF6 leading to inhibition of NF-kappa-B signaling. Post-translationally, hydroxylation by PHD2 modulates the rate of internalization by slowing down recruitment to the plasma membrane and inhibiting subsequent co-internalization with class A receptors.

The protein resides in the cytoplasm. It is found in the nucleus. It localises to the cell membrane. The protein localises to the membrane. Its subcellular location is the clathrin-coated pit. The protein resides in the cytoplasmic vesicle. Its function is as follows. Functions in regulating agonist-mediated G-protein coupled receptor (GPCR) signaling by mediating both receptor desensitization and resensitization processes. During homologous desensitization, beta-arrestins bind to the GPRK-phosphorylated receptor and sterically preclude its coupling to the cognate G-protein; the binding appears to require additional receptor determinants exposed only in the active receptor conformation. The beta-arrestins target many receptors for internalization by acting as endocytic adapters (CLASPs, clathrin-associated sorting proteins) and recruiting the GPRCs to the adapter protein 2 complex 2 (AP-2) in clathrin-coated pits (CCPs). However, the extent of beta-arrestin involvement appears to vary significantly depending on the receptor, agonist and cell type. Internalized arrestin-receptor complexes traffic to intracellular endosomes, where they remain uncoupled from G-proteins. Two different modes of arrestin-mediated internalization occur. Class A receptors, like ADRB2, OPRM1, ENDRA, D1AR and ADRA1B dissociate from beta-arrestin at or near the plasma membrane and undergo rapid recycling. Class B receptors, like AVPR2, AGTR1, NTSR1, TRHR and TACR1 internalize as a complex with arrestin and traffic with it to endosomal vesicles, presumably as desensitized receptors, for extended periods of time. Receptor resensitization then requires that receptor-bound arrestin is removed so that the receptor can be dephosphorylated and returned to the plasma membrane. Mediates endocytosis of CCR7 following ligation of CCL19 but not CCL21. Involved in internalization of P2RY1, P2RY4, P2RY6 and P2RY11 and ATP-stimulated internalization of P2RY2. Involved in phosphorylation-dependent internalization of OPRD1 and subsequent recycling or degradation. Involved in ubiquitination of IGF1R. Beta-arrestins function as multivalent adapter proteins that can switch the GPCR from a G-protein signaling mode that transmits short-lived signals from the plasma membrane via small molecule second messengers and ion channels to a beta-arrestin signaling mode that transmits a distinct set of signals that are initiated as the receptor internalizes and transits the intracellular compartment. Acts as a signaling scaffold for MAPK pathways such as MAPK1/3 (ERK1/2) and MAPK10 (JNK3). ERK1/2 and JNK3 activated by the beta-arrestin scaffold are largely excluded from the nucleus and confined to cytoplasmic locations such as endocytic vesicles, also called beta-arrestin signalosomes. Acts as a signaling scaffold for the AKT1 pathway. GPCRs for which the beta-arrestin-mediated signaling relies on both ARRB1 and ARRB2 (codependent regulation) include ADRB2, F2RL1 and PTH1R. For some GPCRs the beta-arrestin-mediated signaling relies on either ARRB1 or ARRB2 and is inhibited by the other respective beta-arrestin form (reciprocal regulation). Increases ERK1/2 signaling in AGTR1- and AVPR2-mediated activation (reciprocal regulation). Involved in CCR7-mediated ERK1/2 signaling involving ligand CCL19. Is involved in type-1A angiotensin II receptor/AGTR1-mediated ERK activity. Is involved in type-1A angiotensin II receptor/AGTR1-mediated MAPK10 activity. Is involved in dopamine-stimulated AKT1 activity in the striatum by disrupting the association of AKT1 with its negative regulator PP2A. Involved in AGTR1-mediated chemotaxis. Appears to function as signaling scaffold involved in regulation of MIP-1-beta-stimulated CCR5-dependent chemotaxis. Involved in attenuation of NF-kappa-B-dependent transcription in response to GPCR or cytokine stimulation by interacting with and stabilizing CHUK. Suppresses UV-induced NF-kappa-B-dependent activation by interacting with CHUK. The function is promoted by stimulation of ADRB2 and dephosphorylation of ARRB2. Involved in p53/TP53-mediated apoptosis by regulating MDM2 and reducing the MDM2-mediated degradation of p53/TP53. May serve as nuclear messenger for GPCRs. Upon stimulation of OR1D2, may be involved in regulation of gene expression during the early processes of fertilization. Also involved in regulation of receptors other than GPCRs. Involved in endocytosis of TGFBR2 and TGFBR3 and down-regulates TGF-beta signaling such as NF-kappa-B activation. Involved in endocytosis of low-density lipoprotein receptor/LDLR. Involved in endocytosis of smoothened homolog/Smo, which also requires GRK2. Involved in endocytosis of SLC9A5. Involved in endocytosis of ENG and subsequent TGF-beta-mediated ERK activation and migration of epithelial cells. Involved in Toll-like receptor and IL-1 receptor signaling through the interaction with TRAF6 which prevents TRAF6 autoubiquitination and oligomerization required for activation of NF-kappa-B and JUN. Involved in insulin resistance by acting as insulin-induced signaling scaffold for SRC, AKT1 and INSR. Involved in regulation of inhibitory signaling of natural killer cells by recruiting PTPN6 and PTPN11 to KIR2DL1. Involved in IL8-mediated granule release in neutrophils. Involved in the internalization of the atypical chemokine receptor ACKR3. Acts as an adapter protein coupling FFAR4 receptor to specific downstream signaling pathways, as well as mediating receptor endocytosis. During the activation step of NLRP3 inflammasome, directly associates with NLRP3 leading to inhibition of pro-inflammatory cytokine release and inhibition of inflammation. This chain is Beta-arrestin-2 (ARRB2), found in Homo sapiens (Human).